Consider the following 341-residue polypeptide: D-aspartate oxidase (341 aa).

Residues Asp-36, Arg-37, Thr-43, Ser-44, Met-50, Gly-307, Ile-311, and Ser-312 each contribute to the FAD site. The short motif at Ser-339–Leu-341 is the Microbody targeting signal element.

The protein belongs to the DAMOX/DASOX family. Tetramer. Interacts with PEX5; the interaction is direct and required for localization of DDO to the peroxisome. FAD serves as cofactor. Expressed in liver and kidney (at protein level). In the brain, expressed in the frontal, temporal, and occipital lobes of the cortex, hippocampus, striatum, diencephalon, brainstem, cerebellum, spinal cord, plexus choroiderus and ependyma (at protein level). Also expressed in the lung, muscle, heart, spleen, small intestine and testis (at protein level).

It is found in the peroxisome matrix. The protein resides in the cytoplasm. It localises to the cytosol. It carries out the reaction D-aspartate + O2 + H2O = oxaloacetate + H2O2 + NH4(+). The enzyme catalyses D-glutamate + O2 + H2O = H2O2 + 2-oxoglutarate + NH4(+). Its activity is regulated as follows. Inhibited by aminooxyacetic acid, malonate, meso-tartrate and potassium bromide. In terms of biological role, selectively catalyzes the oxidative deamination of acidic amino acids. Suppresses the level of D-aspartate in the brain, an amino acid that can act as an agonist for glutamate receptors. Protects the organism from the toxicity of D-amino acids. May also function in the intestine. This Rattus norvegicus (Rat) protein is D-aspartate oxidase.